A 133-amino-acid chain; its full sequence is Nickel-responsive regulator (133 aa).

Histidine 76, histidine 87, histidine 89, and cysteine 95 together coordinate Ni(2+).

It belongs to the transcriptional regulatory CopG/NikR family. Homotetramer. Ni(2+) is required as a cofactor.

In terms of biological role, transcriptional repressor of the nikABCDE operon. Is active in the presence of excessive concentrations of intracellular nickel. This Escherichia coli O6:K15:H31 (strain 536 / UPEC) protein is Nickel-responsive regulator.